We begin with the raw amino-acid sequence, 236 residues long: Large ribosomal subunit protein uL1 (236 aa).

The protein belongs to the universal ribosomal protein uL1 family. Part of the 50S ribosomal subunit.

Functionally, binds directly to 23S rRNA. The L1 stalk is quite mobile in the ribosome, and is involved in E site tRNA release. Protein L1 is also a translational repressor protein, it controls the translation of the L11 operon by binding to its mRNA. The protein is Large ribosomal subunit protein uL1 of Corynebacterium efficiens (strain DSM 44549 / YS-314 / AJ 12310 / JCM 11189 / NBRC 100395).